Here is a 1077-residue protein sequence, read N- to C-terminus: Carbamoyl phosphate synthase large chain (1077 aa).

The carboxyphosphate synthetic domain stretch occupies residues 1-403; that stretch reads MPKRTDIQSI…SLHKALRGLE (403 aa). ATP is bound by residues Arg-129, Arg-169, Gly-175, Gly-176, Glu-208, Leu-210, Glu-215, Gly-241, Ile-242, His-243, Gln-285, and Glu-299. Positions 133-328 constitute an ATP-grasp 1 domain; the sequence is DKAMKSIGLE…IAKIAAKLAV (196 aa). Mg(2+)-binding residues include Gln-285, Glu-299, and Asn-301. Mn(2+)-binding residues include Gln-285, Glu-299, and Asn-301. Residues 404–553 form an oligomerization domain region; sequence VGATGFDEMV…YSSYDDECEA (150 aa). The tract at residues 554–935 is carbamoyl phosphate synthetic domain; sequence NPTDKEKIMV…AYAKAELGCG (382 aa). The region spanning 678 to 869 is the ATP-grasp 2 domain; it reads QQAVDRLGLL…LAKIAARVMA (192 aa). Arg-714, Arg-753, Leu-755, Glu-760, Gly-785, Val-786, His-787, Ser-788, Gln-828, and Glu-840 together coordinate ATP. Residues Gln-828, Glu-840, and Asn-842 each contribute to the Mg(2+) site. Gln-828, Glu-840, and Asn-842 together coordinate Mn(2+). The MGS-like domain maps to 936–1077; it reads NVYPEGGRAL…HAQVQASLKA (142 aa). An allosteric domain region spans residues 936 to 1077; that stretch reads NVYPEGGRAL…HAQVQASLKA (142 aa).

The protein belongs to the CarB family. Composed of two chains; the small (or glutamine) chain promotes the hydrolysis of glutamine to ammonia, which is used by the large (or ammonia) chain to synthesize carbamoyl phosphate. Tetramer of heterodimers (alpha,beta)4. It depends on Mg(2+) as a cofactor. The cofactor is Mn(2+).

It catalyses the reaction hydrogencarbonate + L-glutamine + 2 ATP + H2O = carbamoyl phosphate + L-glutamate + 2 ADP + phosphate + 2 H(+). The catalysed reaction is hydrogencarbonate + NH4(+) + 2 ATP = carbamoyl phosphate + 2 ADP + phosphate + 2 H(+). The protein operates within amino-acid biosynthesis; L-arginine biosynthesis; carbamoyl phosphate from bicarbonate: step 1/1. Its pathway is pyrimidine metabolism; UMP biosynthesis via de novo pathway; (S)-dihydroorotate from bicarbonate: step 1/3. Functionally, large subunit of the glutamine-dependent carbamoyl phosphate synthetase (CPSase). CPSase catalyzes the formation of carbamoyl phosphate from the ammonia moiety of glutamine, carbonate, and phosphate donated by ATP, constituting the first step of 2 biosynthetic pathways, one leading to arginine and/or urea and the other to pyrimidine nucleotides. The large subunit (synthetase) binds the substrates ammonia (free or transferred from glutamine from the small subunit), hydrogencarbonate and ATP and carries out an ATP-coupled ligase reaction, activating hydrogencarbonate by forming carboxy phosphate which reacts with ammonia to form carbamoyl phosphate. The sequence is that of Carbamoyl phosphate synthase large chain from Vibrio vulnificus (strain CMCP6).